Here is a 381-residue protein sequence, read N- to C-terminus: L-lactate dehydrogenase (381 aa).

An FMN hydroxy acid dehydrogenase domain is found at Met-1 to Gly-380. Residue Tyr-24 participates in substrate binding. Ser-106 and Gln-127 together coordinate FMN. Tyr-129 is a binding site for substrate. Thr-155 provides a ligand contact to FMN. Arg-164 provides a ligand contact to substrate. Residue Lys-251 coordinates FMN. His-275 (proton acceptor) is an active-site residue. Arg-278 is a substrate binding site. Asp-306–Arg-330 serves as a coordination point for FMN.

The protein belongs to the FMN-dependent alpha-hydroxy acid dehydrogenase family. Homotetramer. Requires FMN as cofactor.

It is found in the cell inner membrane. It catalyses the reaction (S)-lactate + A = pyruvate + AH2. Its function is as follows. Catalyzes the conversion of L-lactate to pyruvate. Is coupled to the respiratory chain. The polypeptide is L-lactate dehydrogenase (Pseudomonas entomophila (strain L48)).